A 444-amino-acid chain; its full sequence is Phosphoribosylamine--glycine ligase (444 aa).

The region spanning 109 to 324 is the ATP-grasp domain; it reads RNLFKKYEID…FLDVCFAIAE (216 aa). 140–202 is an ATP binding site; that stretch reads MTSLGKDVVV…EEKLVGVEFT (63 aa). 3 residues coordinate Mg(2+): Q282, E294, and N296. Mn(2+) contacts are provided by Q282, E294, and N296.

It belongs to the GARS family. Mg(2+) serves as cofactor. It depends on Mn(2+) as a cofactor.

The enzyme catalyses 5-phospho-beta-D-ribosylamine + glycine + ATP = N(1)-(5-phospho-beta-D-ribosyl)glycinamide + ADP + phosphate + H(+). It functions in the pathway purine metabolism; IMP biosynthesis via de novo pathway; N(1)-(5-phospho-D-ribosyl)glycinamide from 5-phospho-alpha-D-ribose 1-diphosphate: step 2/2. This is Phosphoribosylamine--glycine ligase from Methanococcus maripaludis (strain C7 / ATCC BAA-1331).